Here is a 358-residue protein sequence, read N- to C-terminus: Histidinol-phosphate aminotransferase (358 aa).

Position 218 is an N6-(pyridoxal phosphate)lysine (Lys-218).

Belongs to the class-II pyridoxal-phosphate-dependent aminotransferase family. Histidinol-phosphate aminotransferase subfamily. Homodimer. Requires pyridoxal 5'-phosphate as cofactor.

The catalysed reaction is L-histidinol phosphate + 2-oxoglutarate = 3-(imidazol-4-yl)-2-oxopropyl phosphate + L-glutamate. The protein operates within amino-acid biosynthesis; L-histidine biosynthesis; L-histidine from 5-phospho-alpha-D-ribose 1-diphosphate: step 7/9. The polypeptide is Histidinol-phosphate aminotransferase (Dehalococcoides mccartyi (strain CBDB1)).